Consider the following 223-residue polypeptide: Peptidyl-tRNA hydrolase (223 aa).

A tRNA-binding site is contributed by Tyr14. The active-site Proton acceptor is His19. Tyr64, Asn66, and Asn112 together coordinate tRNA. The disordered stretch occupies residues Met183–Pro223.

It belongs to the PTH family. Monomer.

Its subcellular location is the cytoplasm. The catalysed reaction is an N-acyl-L-alpha-aminoacyl-tRNA + H2O = an N-acyl-L-amino acid + a tRNA + H(+). In terms of biological role, hydrolyzes ribosome-free peptidyl-tRNAs (with 1 or more amino acids incorporated), which drop off the ribosome during protein synthesis, or as a result of ribosome stalling. Functionally, catalyzes the release of premature peptidyl moieties from peptidyl-tRNA molecules trapped in stalled 50S ribosomal subunits, and thus maintains levels of free tRNAs and 50S ribosomes. The chain is Peptidyl-tRNA hydrolase from Sorangium cellulosum (strain So ce56) (Polyangium cellulosum (strain So ce56)).